Here is a 32-residue protein sequence, read N- to C-terminus: Cytochrome b6-f complex subunit 6 (32 aa).

Residues 6 to 26 form a helical membrane-spanning segment; the sequence is VFYIVFIALFFGIAVGIIFAI.

This sequence belongs to the PetL family. In terms of assembly, the 4 large subunits of the cytochrome b6-f complex are cytochrome b6, subunit IV (17 kDa polypeptide, PetD), cytochrome f and the Rieske protein, while the 4 small subunits are PetG, PetL, PetM and PetN. The complex functions as a dimer.

The protein resides in the cellular thylakoid membrane. Component of the cytochrome b6-f complex, which mediates electron transfer between photosystem II (PSII) and photosystem I (PSI), cyclic electron flow around PSI, and state transitions. PetL is important for photoautotrophic growth as well as for electron transfer efficiency and stability of the cytochrome b6-f complex. This chain is Cytochrome b6-f complex subunit 6, found in Mastigocladus laminosus (Fischerella sp.).